The chain runs to 143 residues: Cofilin (143 aa).

The 133-residue stretch at 5-137 folds into the ADF-H domain; sequence GVAVADESLT…AYESVLEKVS (133 aa).

Belongs to the actin-binding proteins ADF family.

It is found in the cytoplasm. The protein localises to the cytoskeleton. The protein resides in the nucleus matrix. Its function is as follows. Controls reversibly actin polymerization and depolymerization in a pH-sensitive manner. It has the ability to bind G- and F-actin in a 1:1 ratio of cofilin to actin. Binding to F-actin is regulated by tropomyosin. It is the major component of intranuclear and cytoplasmic actin rods. Required for accumulation of actin at the cell division site via depolymerizing actin at the cell ends. In association with myosin II has a role in the assembly of the contractile ring via severing actin filaments. Involved in the maintenance of the contractile ring once formed. In association with profilin and capping protein, has a role in the mitotic reorganization of the actin cytoskeleton. In Eremothecium gossypii (strain ATCC 10895 / CBS 109.51 / FGSC 9923 / NRRL Y-1056) (Yeast), this protein is Cofilin (COF1).